Consider the following 334-residue polypeptide: Transaldolase (334 aa).

S2 is subject to N-acetylserine. K143 acts as the Schiff-base intermediate with substrate in catalysis.

The protein belongs to the transaldolase family. Type 1 subfamily. Homodimer.

The catalysed reaction is D-sedoheptulose 7-phosphate + D-glyceraldehyde 3-phosphate = D-erythrose 4-phosphate + beta-D-fructose 6-phosphate. It functions in the pathway carbohydrate degradation; pentose phosphate pathway; D-glyceraldehyde 3-phosphate and beta-D-fructose 6-phosphate from D-ribose 5-phosphate and D-xylulose 5-phosphate (non-oxidative stage): step 2/3. In terms of biological role, transaldolase is important for the balance of metabolites in the pentose-phosphate pathway. The chain is Transaldolase (TAL1) from Kluyveromyces lactis (strain ATCC 8585 / CBS 2359 / DSM 70799 / NBRC 1267 / NRRL Y-1140 / WM37) (Yeast).